A 1058-amino-acid chain; its full sequence is Gem-associated protein 4 (1058 aa).

At Met-1 the chain carries N-acetylmethionine. Thr-84 is subject to Phosphothreonine. Phosphoserine is present on residues Ser-86 and Ser-205. The tract at residues 714-735 (LPKEKRCLSLDRKDLAIHILEL) is leucine-zipper.

In terms of assembly, part of the core SMN complex that contains SMN1, GEMIN2/SIP1, DDX20/GEMIN3, GEMIN4, GEMIN5, GEMIN6, GEMIN7, GEMIN8 and STRAP/UNRIP. Part of the SMN-Sm complex that contains SMN1, GEMIN2/SIP1, DDX20/GEMIN3, GEMIN4, GEMIN5, GEMIN6, GEMIN7, GEMIN8, STRAP/UNRIP and the Sm proteins SNRPB, SNRPD1, SNRPD2, SNRPD3, SNRPE, SNRPF and SNRPG. Interacts with GEMIN3; the interaction is direct. Interacts with GEMIN5. Interacts with GEMIN8; the interaction is direct. Interacts with several snRNP SM core proteins, including SNRPB, SNRPD1, SNRPD2, SNRPD3 and SNRPE. Interacts with PPP4R2.

Its subcellular location is the cytoplasm. It localises to the nucleus. The protein localises to the nucleolus. The protein resides in the gem. Functionally, the SMN complex catalyzes the assembly of small nuclear ribonucleoproteins (snRNPs), the building blocks of the spliceosome, and thereby plays an important role in the splicing of cellular pre-mRNAs. Most spliceosomal snRNPs contain a common set of Sm proteins SNRPB, SNRPD1, SNRPD2, SNRPD3, SNRPE, SNRPF and SNRPG that assemble in a heptameric protein ring on the Sm site of the small nuclear RNA to form the core snRNP (Sm core). In the cytosol, the Sm proteins SNRPD1, SNRPD2, SNRPE, SNRPF and SNRPG are trapped in an inactive 6S pICln-Sm complex by the chaperone CLNS1A that controls the assembly of the core snRNP. To assemble core snRNPs, the SMN complex accepts the trapped 5Sm proteins from CLNS1A forming an intermediate. Binding of snRNA inside 5Sm triggers eviction of the SMN complex, thereby allowing binding of SNRPD3 and SNRPB to complete assembly of the core snRNP. In Homo sapiens (Human), this protein is Gem-associated protein 4 (GEMIN4).